We begin with the raw amino-acid sequence, 201 residues long: Eukaryotic translation initiation factor 4E-5 (201 aa).

Cysteine 122 and cysteine 126 form a disulfide bridge.

It belongs to the eukaryotic initiation factor 4E family. EIF4F is a multi-subunit complex, the composition of which varies with external and internal environmental conditions. It is composed of at least eIF4A, eIF4E and eIF4G. eIF4E is also known to interact with other partners. In terms of tissue distribution, enriched in the germline.

In terms of biological role, recognizes and binds the 7-methylguanosine-containing mRNA cap during an early step in the initiation of protein synthesis and facilitates ribosome binding by inducing the unwinding of the mRNAs secondary structures. All 5 eIF4E proteins bind monomethyl cap structures. Only ife-1, ife-2 and ife-5 bind trimethyl cap structures which result from trans-splicing. Translation of trimethyl cap structure mRNAs may be regulated by intracellular redox state; disulfide bonds change the width and depth of the cap-binding cavity determining selectivity to mRNA caps. This Caenorhabditis elegans protein is Eukaryotic translation initiation factor 4E-5 (ife-5).